The chain runs to 673 residues: DNA ligase (673 aa).

Residues 34–38 (DAEYD), 83–84 (SL), and Glu-116 each bind NAD(+). Lys-118 functions as the N6-AMP-lysine intermediate in the catalytic mechanism. The NAD(+) site is built by Arg-139, Glu-176, Lys-293, and Lys-317. Zn(2+) contacts are provided by Cys-411, Cys-414, Cys-429, and Cys-435. In terms of domain architecture, BRCT spans 595-673 (NQQNPFFGKT…EDEFLKWVNS (79 aa)).

It belongs to the NAD-dependent DNA ligase family. LigA subfamily. Mg(2+) is required as a cofactor. Requires Mn(2+) as cofactor.

It catalyses the reaction NAD(+) + (deoxyribonucleotide)n-3'-hydroxyl + 5'-phospho-(deoxyribonucleotide)m = (deoxyribonucleotide)n+m + AMP + beta-nicotinamide D-nucleotide.. DNA ligase that catalyzes the formation of phosphodiester linkages between 5'-phosphoryl and 3'-hydroxyl groups in double-stranded DNA using NAD as a coenzyme and as the energy source for the reaction. It is essential for DNA replication and repair of damaged DNA. In Legionella pneumophila (strain Lens), this protein is DNA ligase.